The following is a 702-amino-acid chain: Elongation factor G 2 (702 aa).

The tr-type G domain maps to 8–290 (ERYRNIGISA…AVIDYLPSPV (283 aa)). Residues 17-24 (AHIDAGKT), 88-92 (DTPGH), and 142-145 (NKMD) contribute to the GTP site.

Belongs to the TRAFAC class translation factor GTPase superfamily. Classic translation factor GTPase family. EF-G/EF-2 subfamily.

Its subcellular location is the cytoplasm. Catalyzes the GTP-dependent ribosomal translocation step during translation elongation. During this step, the ribosome changes from the pre-translocational (PRE) to the post-translocational (POST) state as the newly formed A-site-bound peptidyl-tRNA and P-site-bound deacylated tRNA move to the P and E sites, respectively. Catalyzes the coordinated movement of the two tRNA molecules, the mRNA and conformational changes in the ribosome. This Cupriavidus metallidurans (strain ATCC 43123 / DSM 2839 / NBRC 102507 / CH34) (Ralstonia metallidurans) protein is Elongation factor G 2.